The following is a 505-amino-acid chain: ATP synthase subunit alpha (505 aa).

Gly170 to Ser177 contributes to the ATP binding site.

The protein belongs to the ATPase alpha/beta chains family. As to quaternary structure, F-type ATPases have 2 components, CF(1) - the catalytic core - and CF(0) - the membrane proton channel. CF(1) has five subunits: alpha(3), beta(3), gamma(1), delta(1), epsilon(1). CF(0) has four main subunits: a(1), b(1), b'(1) and c(9-12).

It localises to the cellular thylakoid membrane. The catalysed reaction is ATP + H2O + 4 H(+)(in) = ADP + phosphate + 5 H(+)(out). Produces ATP from ADP in the presence of a proton gradient across the membrane. The alpha chain is a regulatory subunit. This Prochlorococcus marinus (strain MIT 9312) protein is ATP synthase subunit alpha.